Here is a 205-residue protein sequence, read N- to C-terminus: Probable peptidyl-tRNA hydrolase 2 (205 aa).

Residues 40–49 (YSSKNANKAS) are compositionally biased toward polar residues. A disordered region spans residues 40 to 68 (YSSKNANKASNPEKESPVSVSNDEDSESE). Ser65 and Ser79 each carry phosphoserine.

This sequence belongs to the PTH2 family.

It catalyses the reaction an N-acyl-L-alpha-aminoacyl-tRNA + H2O = an N-acyl-L-amino acid + a tRNA + H(+). The natural substrate for this enzyme may be peptidyl-tRNAs which drop off the ribosome during protein synthesis. The protein is Probable peptidyl-tRNA hydrolase 2 of Schizosaccharomyces pombe (strain 972 / ATCC 24843) (Fission yeast).